The sequence spans 545 residues: Phenylalanine--tRNA ligase beta subunit (545 aa).

The region spanning 268-343 (FLHKIQNVRE…MSIGYNNLEP (76 aa)) is the B5 domain. Residues Asp-321, Asp-327, Glu-330, and Asp-331 each contribute to the Mg(2+) site.

This sequence belongs to the phenylalanyl-tRNA synthetase beta subunit family. Type 2 subfamily. Tetramer of two alpha and two beta subunits. Mg(2+) is required as a cofactor.

The protein localises to the cytoplasm. The catalysed reaction is tRNA(Phe) + L-phenylalanine + ATP = L-phenylalanyl-tRNA(Phe) + AMP + diphosphate + H(+). This Saccharolobus islandicus (strain Y.N.15.51 / Yellowstone #2) (Sulfolobus islandicus) protein is Phenylalanine--tRNA ligase beta subunit.